The chain runs to 234 residues: HTH-type transcriptional regulator MT1864 (234 aa).

Residues 15–75 (EQIEAKIVEL…LLLVDAYSDL (61 aa)) form the HTH tetR-type domain. The segment at residues 38 to 57 (SLRAIARNLGMVSSAVYRYV) is a DNA-binding region (H-T-H motif).

Homodimer.

Its subcellular location is the cytoplasm. Functionally, may participate in the regulatory network that controls the expression of MmpL lipid transporters. The chain is HTH-type transcriptional regulator MT1864 from Mycobacterium tuberculosis (strain CDC 1551 / Oshkosh).